Here is a 247-residue protein sequence, read N- to C-terminus: DNA repair protein RecO (247 aa).

This sequence belongs to the RecO family.

Its function is as follows. Involved in DNA repair and RecF pathway recombination. The sequence is that of DNA repair protein RecO from Methylocella silvestris (strain DSM 15510 / CIP 108128 / LMG 27833 / NCIMB 13906 / BL2).